Consider the following 71-residue polypeptide: IRCFITPDITSKDCPNGHVCYTKTWCDAFCSIRGKRVDLGCAATCPTVKTGVDIQCCSTDNCNPFPTRKRP.

5 cysteine pairs are disulfide-bonded: Cys-3-Cys-20, Cys-14-Cys-41, Cys-26-Cys-30, Cys-45-Cys-56, and Cys-57-Cys-62.

This sequence belongs to the three-finger toxin family. Long-chain subfamily. Type II alpha-neurotoxin sub-subfamily. As to quaternary structure, monomer, homo- or heterodimer with cytotoxins 1 (P60305), 2 (AC P01445), and 3 (AC P01446); disulfide-linked. Post-translationally, in homodimer alpha-cobratoxin, selective reduction of Cys(26)-Cys(30) in one subunit does not affect the activity against the alpha-7/CHRNA7 nAChR, whereas its reduction in both subunits almost prevents alpha-7/CHRNA7 nAChR recognition. On the contrary, reduction of one or both Cys(26)-Cys(30) disulfide bonds in the homodimer considerably potentiates inhibition of the alpha-3-beta-2/CHRNA3-CHRNB2 nAChR by the toxin. Expressed by the venom gland.

It localises to the secreted. Functionally, monomer: binds with high affinity to muscular (alpha-1-beta-1-gamma-delta/CHRNA1-CHRNB1-CHRNG-CHRND) nAChR (tested on Torpedo californica, Kd=0.2-4.5 nM) and neuronal alpha-7/CHRNA7 nicotinic acetylcholine receptors (Kd=13-105 nM). Also inhibits GABA(A) channels. Heteropentamer targets studied are composed of alpha-1-beta-3-gamma-2 (GABRA1-GABRB3-GABRG2) subunits (IC(50)=236 nM), alpha-1-beta-2-gamma-2 (GABRA1-GABRB2-GABRG2) subunits (IC(50)=469 nM), alpha-2-beta-2-gamma-2 (GABRA2-GABRB2-GABRG2) subunits (IC(50)=485 nM), alpha-5-beta-3-gamma-2 (GABRA5-GABRB3-GABRG2) subunits (IC(50)=635 nM), and alpha-2-beta-3-gamma-2 (GABRA2-GABRB3-GABRG2) subunits (IC(50)=1099 nM) (activated by 10 uM GABA). In terms of biological role, homodimer: binds with high affinity (but lower than the monomeric form) to muscular (IC(50)=9.7 nM) and with low affinity to neuronal alpha-7/CHRNA7 nAChRs (IC(50)=1370 nM). However, it acquires (compared to the monomeric form) the capacity to block alpha-3/beta-2 (CHRNA3/CHRNB2) nAChRs. Heterodimer with cytotoxin 3 (AC P01446): is slightly more active than the homodimer in inhibiting alpha-7/CHRNA7 nAChR and is considerably more active in blocking the alpha-3-beta-2/CHRNA3-CHRNB2 nAChR. The chain is Alpha-cobratoxin from Naja kaouthia (Monocled cobra).